A 276-amino-acid polypeptide reads, in one-letter code: Pirin-like protein CC_0481 (276 aa).

It belongs to the pirin family.

This Caulobacter vibrioides (strain ATCC 19089 / CIP 103742 / CB 15) (Caulobacter crescentus) protein is Pirin-like protein CC_0481.